The following is a 242-amino-acid chain: 7-cyano-7-deazaguanine synthase (242 aa).

Residue 12-22 (FSGGQDSATCL) participates in ATP binding. 4 residues coordinate Zn(2+): Cys200, Cys215, Cys218, and Cys221.

It belongs to the QueC family. It depends on Zn(2+) as a cofactor.

The catalysed reaction is 7-carboxy-7-deazaguanine + NH4(+) + ATP = 7-cyano-7-deazaguanine + ADP + phosphate + H2O + H(+). It participates in purine metabolism; 7-cyano-7-deazaguanine biosynthesis. Its function is as follows. Catalyzes the ATP-dependent conversion of 7-carboxy-7-deazaguanine (CDG) to 7-cyano-7-deazaguanine (preQ(0)). The protein is 7-cyano-7-deazaguanine synthase of Gluconobacter oxydans (strain 621H) (Gluconobacter suboxydans).